A 233-amino-acid polypeptide reads, in one-letter code: ATP synthase subunit a (233 aa).

6 consecutive transmembrane segments (helical) span residues 27 to 47 (ANFVTMQLLVVAIIVVLFAIL), 85 to 105 (YLAFFGTIFIFILFANLIGVV), 114 to 134 (VPSVPAGCAIAAFFYYNIVGV), 143 to 163 (LAHFAGPMPLLAPLMIPIELV), 189 to 209 (VFLKLTFLFVPAVFMGLHVFV), and 210 to 230 (SFLQAYIFMLLTMMYVAGAVA).

Belongs to the ATPase A chain family. As to quaternary structure, F-type ATPases have 2 components, CF(1) - the catalytic core - and CF(0) - the membrane proton channel. CF(1) has five subunits: alpha(3), beta(3), gamma(1), delta(1), epsilon(1). CF(0) has three main subunits: a(1), b(2) and c(9-12). The alpha and beta chains form an alternating ring which encloses part of the gamma chain. CF(1) is attached to CF(0) by a central stalk formed by the gamma and epsilon chains, while a peripheral stalk is formed by the delta and b chains.

It is found in the cell inner membrane. Key component of the proton channel; it plays a direct role in the translocation of protons across the membrane. The protein is ATP synthase subunit a of Solibacter usitatus (strain Ellin6076).